A 373-amino-acid chain; its full sequence is Queuine tRNA-ribosyltransferase (373 aa).

The active-site Proton acceptor is the aspartate 90. Substrate-binding positions include 90-94, aspartate 144, glutamine 193, and glycine 220; that span reads DSGGF. The tract at residues 251-257 is RNA binding; the sequence is GVGTPED. Aspartate 270 (nucleophile) is an active-site residue. Positions 275–279 are RNA binding; important for wobble base 34 recognition; that stretch reads TRNAR. Residues cysteine 308, cysteine 310, cysteine 313, and histidine 339 each coordinate Zn(2+).

This sequence belongs to the queuine tRNA-ribosyltransferase family. As to quaternary structure, homodimer. Within each dimer, one monomer is responsible for RNA recognition and catalysis, while the other monomer binds to the replacement base PreQ1. Requires Zn(2+) as cofactor.

The catalysed reaction is 7-aminomethyl-7-carbaguanine + guanosine(34) in tRNA = 7-aminomethyl-7-carbaguanosine(34) in tRNA + guanine. The protein operates within tRNA modification; tRNA-queuosine biosynthesis. Its function is as follows. Catalyzes the base-exchange of a guanine (G) residue with the queuine precursor 7-aminomethyl-7-deazaguanine (PreQ1) at position 34 (anticodon wobble position) in tRNAs with GU(N) anticodons (tRNA-Asp, -Asn, -His and -Tyr). Catalysis occurs through a double-displacement mechanism. The nucleophile active site attacks the C1' of nucleotide 34 to detach the guanine base from the RNA, forming a covalent enzyme-RNA intermediate. The proton acceptor active site deprotonates the incoming PreQ1, allowing a nucleophilic attack on the C1' of the ribose to form the product. After dissociation, two additional enzymatic reactions on the tRNA convert PreQ1 to queuine (Q), resulting in the hypermodified nucleoside queuosine (7-(((4,5-cis-dihydroxy-2-cyclopenten-1-yl)amino)methyl)-7-deazaguanosine). The chain is Queuine tRNA-ribosyltransferase from Campylobacter jejuni subsp. jejuni serotype O:2 (strain ATCC 700819 / NCTC 11168).